We begin with the raw amino-acid sequence, 523 residues long: uncharacterized protein (523 aa).

The transit peptide at 1–63 (MACVSTCLIL…NRHGIAVVKA (63 aa)) directs the protein to the chloroplast. 3 helical membrane passes run 180–200 (VSFG…IIAL), 386–406 (ALVI…NTLL), and 423–443 (IYPL…IRWF).

The protein resides in the plastid. It is found in the chloroplast membrane. This is an uncharacterized protein from Arabidopsis thaliana (Mouse-ear cress).